Reading from the N-terminus, the 221-residue chain is MRFPRAVLFDLDGTLLDSAPDMLATVNAMLSERGLPCITLAQLRPVVSKGSRAMLAVAFAHLDAAAREALVPEFLKRYEALLGTQAQLFDGVEVMLQRLEQAGCVWGIVTNKPEYLAQLILPQLGWQQRCAVLIGGDTLAERKPHPLPLLVAADRIGVAATQCVYVGDDERDILAARAAGMPSVAALWGYRLGDDDPLSWQADVLVEQPPQLWEPAAWPQP.

Residue Asp-10 is the Nucleophile of the active site. The Mg(2+) site is built by Asp-10, Asp-12, and Asp-168.

It belongs to the HAD-like hydrolase superfamily. CbbY/CbbZ/Gph/YieH family. It depends on Mg(2+) as a cofactor.

It carries out the reaction 2-phosphoglycolate + H2O = glycolate + phosphate. It participates in organic acid metabolism; glycolate biosynthesis; glycolate from 2-phosphoglycolate: step 1/1. Specifically catalyzes the dephosphorylation of 2-phosphoglycolate. Is involved in the dissimilation of the intracellular 2-phosphoglycolate formed during the DNA repair of 3'-phosphoglycolate ends, a major class of DNA lesions induced by oxidative stress. The sequence is that of Phosphoglycolate phosphatase from Xanthomonas campestris pv. campestris (strain 8004).